A 221-amino-acid chain; its full sequence is MSDGDYDYLIKFLALGDSGVGKTSVLYQYTDGKFNSKFITTVGIDFREKRVVYRANGPDGAIGRGQRIHLQLWDTAGQERFRSLTTAFFRDAMGFLLLFDLTNEQSFLNVRNWISQLQMHAYCENPDIVLCGNKSDLEDQRVVKEEEARGLAEKYGIPYFETSAANGTNVSLAIETLLDLIMKRMERCVDKSWIPEGVVRSNGHTSADPLNEEKEKGSCGC.

S2 bears the N-acetylserine mark. The residue at position 2 (S2) is a Phosphoserine. GTP is bound at residue 16–24 (GDSGVGKTS). The Effector region motif lies at 38–46 (FITTVGIDF). Residues 74-78 (DTAGQ), 133-136 (NKSD), and 163-165 (SAA) contribute to the GTP site. The cysteines at positions 123 and 188 are disulfide-linked. Positions 202-221 (NGHTSADPLNEEKEKGSCGC) are disordered. Residues 211 to 221 (NEEKEKGSCGC) show a composition bias toward basic and acidic residues. S-geranylgeranyl cysteine attachment occurs at residues C219 and C221. Cysteine methyl ester is present on C221.

It belongs to the small GTPase superfamily. Rab family. As to quaternary structure, binds SYTL1, SLAC2B, MYRIP, SYTL3, SYTL4 and SYTL5. Interacts with RPH3A and RPH3A. Binds MLPH and SYTL2. Interacts with UNC13D. Does not interact with the BLOC-3 complex (heterodimer of HPS1 and HPS4). Interacts (GDP-bound form preferentially) with DENND10.

The protein localises to the membrane. Its subcellular location is the melanosome. It is found in the late endosome. The protein resides in the lysosome. It carries out the reaction GTP + H2O = GDP + phosphate + H(+). Regulated by guanine nucleotide exchange factors (GEFs) which promote the exchange of bound GDP for free GTP, GTPase activating proteins (GAPs) which increase the GTP hydrolysis activity, and GDP dissociation inhibitors which inhibit the dissociation of the nucleotide from the GTPase. Activated by GEFs such as DENND10. Its function is as follows. Small GTPase which cycles between active GTP-bound and inactive GDP-bound states. In its active state, binds to a variety of effector proteins to regulate homeostasis of late endocytic pathway, including endosomal positioning, maturation and secretion. Plays a role in cytotoxic granule exocytosis in lymphocytes. Required for both granule maturation and granule docking and priming at the immunologic synapse. The sequence is that of Ras-related protein Rab-27A (RAB27A) from Sus scrofa (Pig).